The following is a 437-amino-acid chain: MSMFLDTAKISVKAGRGGDGMVAFRREKYVPNGGPWGGDGGKGGSVIFKVNEGLRTLMDFRYNRNFKAKAGEKGMTKGMHGRGAEDLIVSLPPGTTVRDATTGKVITDLVEHDQEFVVARGGRGGRGNIRFATPRNPAPEIAENGEPGEERELQLELKILADVGLVGFPSVGKSTLLSVVSAAKPKIGAYHFTTIVPNLGMVRTKSGDSFAMADLPGLIEGASQGVGLGTQFLRHIERTRVILHVIDMSASEGRDPYDDYVSINNELETYNLRLMERPQIIVANKMDMPDSEENLAAFKEKLAANYDEFDDMPMIFPISSLAHQGLENLMDATAELLANTEEFLLYDETDMQEDEAYYGFNEDERPFEITRDDDATWVLYGDKLEKLFVMTNMERDESIMKFARQLRGMGVDEALRERGAKDGDIVRIGNFEFEFVD.

In terms of domain architecture, Obg spans 2–160 (SMFLDTAKIS…RELQLELKIL (159 aa)). The OBG-type G domain occupies 161–338 (ADVGLVGFPS…LMDATAELLA (178 aa)). Residues 167-174 (GFPSVGKS), 192-196 (FTTIV), 214-217 (DLPG), 284-287 (NKMD), and 319-321 (SSL) each bind GTP. The Mg(2+) site is built by serine 174 and threonine 194. The region spanning 359 to 437 (GFNEDERPFE…IGNFEFEFVD (79 aa)) is the OCT domain.

Belongs to the TRAFAC class OBG-HflX-like GTPase superfamily. OBG GTPase family. Monomer. It depends on Mg(2+) as a cofactor.

Its subcellular location is the cytoplasm. Its function is as follows. An essential GTPase which binds GTP, GDP and possibly (p)ppGpp with moderate affinity, with high nucleotide exchange rates and a fairly low GTP hydrolysis rate. Plays a role in control of the cell cycle, stress response, ribosome biogenesis and in those bacteria that undergo differentiation, in morphogenesis control. In Streptococcus agalactiae serotype Ia (strain ATCC 27591 / A909 / CDC SS700), this protein is GTPase Obg.